The chain runs to 565 residues: Phospholipase B-like protein C (565 aa).

The signal sequence occupies residues 1-21 (MNKIIILISLFLNFLFGYVVC). 10 N-linked (GlcNAc...) asparagine glycosylation sites follow: N53, N84, N118, N200, N201, N211, N266, N302, N406, and N485.

Belongs to the phospholipase B-like family.

It localises to the secreted. Its function is as follows. Probable phospholipase. The chain is Phospholipase B-like protein C (plbC) from Dictyostelium discoideum (Social amoeba).